A 513-amino-acid polypeptide reads, in one-letter code: Membrane protein (513 aa).

4 tandem repeats follow at residues 9–11, 12–14, 15–17, and 18–20. The 4 X 3 AA tandem repeats of P-S-A stretch occupies residues 9–20; it reads PSAPSAPSAPSA. Transmembrane regions (helical) follow at residues 32–52, 56–76, 79–99, 126–146, 165–185, 208–228, 254–274, 309–329, 332–352, 360–380, 400–420, 422–442, 447–467, and 487–507; these read LTLHWGLFAAVAALLVVLAIP, GLTVAGQRMLAILAFAIVVWI, AVSYETSAIMITSLMAGLIGF, TALALVAAALFISAAMTVTGL, ILIGTIAVTIALSLVVPSATA, NIAAGIMITVAQATSIWNVGI, QWLIAGAPWAIAMSVVLYFLV, LAAVSLGLLLFWATEGKLHSF, ATVTFVGLVILMMPRIGVMDW, PWGTLIVFGVGISLGTALLST, GALLVFAILSAFLILIHLGFA, ATALTAALLPILIAVLQTLPG, VGMTMLLGFTVSFGFILPINA, and IGIPVTIIGYAMMLLFAATYW.

It belongs to the SLC13A/DASS transporter (TC 2.A.47) family. DIT1 subfamily.

It localises to the cell membrane. This Cupriavidus necator (strain ATCC 17699 / DSM 428 / KCTC 22496 / NCIMB 10442 / H16 / Stanier 337) (Ralstonia eutropha) protein is Membrane protein.